The chain runs to 159 residues: Phosphopantetheine adenylyltransferase (159 aa).

Serine 8 contributes to the substrate binding site. ATP contacts are provided by residues serine 8–phenylalanine 9 and histidine 16. Positions 40, 72, and 86 each coordinate substrate. Residues glycine 87 to arginine 89, glutamate 97, and tyrosine 122 to serine 128 contribute to the ATP site.

It belongs to the bacterial CoaD family. In terms of assembly, homohexamer. Requires Mg(2+) as cofactor.

The protein resides in the cytoplasm. It catalyses the reaction (R)-4'-phosphopantetheine + ATP + H(+) = 3'-dephospho-CoA + diphosphate. It participates in cofactor biosynthesis; coenzyme A biosynthesis; CoA from (R)-pantothenate: step 4/5. Reversibly transfers an adenylyl group from ATP to 4'-phosphopantetheine, yielding dephospho-CoA (dPCoA) and pyrophosphate. This chain is Phosphopantetheine adenylyltransferase, found in Treponema pallidum (strain Nichols).